Reading from the N-terminus, the 322-residue chain is Aldo-keto reductase family 1 member C23 (322 aa).

20 to 24 (GFGTY) serves as a coordination point for NADP(+). Lysine 31 contacts substrate. Aspartate 50 contributes to the NADP(+) binding site. Tyrosine 55 acts as the Proton donor in catalysis. Histidine 117 is a substrate binding site. Residues 166–167 (SN), glutamine 190, 216–221 (YSALGS), and 269–279 (KSYNEKRIKEN) each bind NADP(+).

It belongs to the aldo/keto reductase family. As to quaternary structure, monomer. As to expression, detected in follicle granulosa cells (at protein level). Detected in heart, lung, liver, kidney, stomach, uterus, testis, skeletal muscle and granulosa cells of the follicle wall.

The protein localises to the cytoplasm. In terms of biological role, NADP-dependent oxidoreductase that has 20-alpha-hydroxysteroid dehydrogenase activity. The sequence is that of Aldo-keto reductase family 1 member C23 (AKR1C23) from Equus caballus (Horse).